Consider the following 593-residue polypeptide: NADH-quinone oxidoreductase subunit C/D 1 (593 aa).

Positions 1–193 (MPWAKEGDLQ…DNLEGLMNYD (193 aa)) are NADH dehydrogenase I subunit C. The interval 217-593 (AQIVLNWGPL…IDPVVGETDR (377 aa)) is NADH dehydrogenase I subunit D.

In the N-terminal section; belongs to the complex I 30 kDa subunit family. This sequence in the C-terminal section; belongs to the complex I 49 kDa subunit family. In terms of assembly, NDH-1 is composed of 13 different subunits. Subunits NuoB, CD, E, F, and G constitute the peripheral sector of the complex.

It localises to the cell inner membrane. The enzyme catalyses a quinone + NADH + 5 H(+)(in) = a quinol + NAD(+) + 4 H(+)(out). In terms of biological role, NDH-1 shuttles electrons from NADH, via FMN and iron-sulfur (Fe-S) centers, to quinones in the respiratory chain. The immediate electron acceptor for the enzyme in this species is believed to be ubiquinone. Couples the redox reaction to proton translocation (for every two electrons transferred, four hydrogen ions are translocated across the cytoplasmic membrane), and thus conserves the redox energy in a proton gradient. The chain is NADH-quinone oxidoreductase subunit C/D 1 (nuoC1) from Aquifex aeolicus (strain VF5).